A 771-amino-acid chain; its full sequence is Tetratricopeptide repeat-containing protein trd-1 (771 aa).

6 TPR repeats span residues 389-415, 416-449, 451-484, 485-518, 520-552, and 553-586; these read LEMW…IRRL, IEQK…SDDR, ARAH…QPIQ, LGTW…QPDH, EAWN…NYEH, and PNVW…NKRG.

The protein belongs to the TTC27 family. Expressed in the spermatheca.

It localises to the cytoplasm. Developmental protein required for cell fate determination in both the germline and seam cells of the developing epidermis. Specifically, involved in sex determination and may function in parallel or downstream of other sex determination factors, including tra-2 and fem-3, to promote oogenesis in its role in the regulation of the switch from spermatogenesis to oogenesis in the gonads. Also implicated in the mitosis to meiosis switch in distal tip cells. The polypeptide is Tetratricopeptide repeat-containing protein trd-1 (Caenorhabditis elegans).